The following is a 465-amino-acid chain: GTPase Der (465 aa).

EngA-type G domains follow at residues 3 to 167 (PLVA…PERG) and 179 to 352 (IHIA…VSAL). GTP is bound by residues 9-16 (GRPNVGKS), 57-61 (DTGGM), 119-122 (NKID), 185-192 (GRPNVGKS), 232-236 (DTAGL), and 297-300 (NKWD). Residues 353–437 (RQFSTSEVNK…PVRFLFREGD (85 aa)) form the KH-like domain.

Belongs to the TRAFAC class TrmE-Era-EngA-EngB-Septin-like GTPase superfamily. EngA (Der) GTPase family. In terms of assembly, associates with the 50S ribosomal subunit.

Its function is as follows. GTPase that plays an essential role in the late steps of ribosome biogenesis. The polypeptide is GTPase Der (Xylella fastidiosa (strain 9a5c)).